A 481-amino-acid chain; its full sequence is uncharacterized protein (481 aa).

Transmembrane regions (helical) follow at residues 3–23, 33–53, 75–95, 99–119, 122–142, 155–175, 196–216, 241–261, 264–284, 303–323, 351–371, 400–420, and 443–463; these read YLPM…LLHG, FITA…YYYF, QAII…GMGE, NNMF…IVLA, IFNL…LVFL, YMIM…FLLA, IYGG…LPPF, FVLV…DYFA, HAVL…MALL, VATG…FHAI, GGLL…KLAI, IIMI…FYLI, and VFSL…PDIV.

Its subcellular location is the cell membrane. This is an uncharacterized protein from Methanocaldococcus jannaschii (strain ATCC 43067 / DSM 2661 / JAL-1 / JCM 10045 / NBRC 100440) (Methanococcus jannaschii).